A 523-amino-acid chain; its full sequence is Monocarboxylate transporter 7 (523 aa).

Residues 1–21 (MTQNKLKLCSKANVYTEVPDG) are Cytoplasmic-facing. A helical transmembrane segment spans residues 22-42 (GWGWAVAVSFFFVEVFTYGII). At 43–62 (KTFGVFFNDLMDSFNESNSR) the chain is on the extracellular side. Residues 63–83 (ISWIISICVFVLTFSAPLATV) traverse the membrane as a helical segment. Residues 84–91 (LSNRFGHR) lie on the Cytoplasmic side of the membrane. The helical transmembrane segment at 92–112 (LVVMLGGLLVSTGMVAASFSQ) threads the bilayer. Over 113-118 (EVSHMY) the chain is Extracellular. Residues 119 to 139 (VAIGIISGLGYCFSFLPTVTI) form a helical membrane-spanning segment. Residues 140–149 (LSQYFGKRRS) are Cytoplasmic-facing. Residues 150 to 170 (IVTAVASTGECFAVFAFAPAI) form a helical membrane-spanning segment. The Extracellular segment spans residues 171 to 184 (MALKERIGWRYSLL). Residues 185 to 205 (FVGLLQLNIVIFGALLRPIFI) traverse the membrane as a helical segment. Residues 206 to 299 (RGPASPKIVI…KEKSFICYAL (94 aa)) lie on the Cytoplasmic side of the membrane. Residues Ser234, Ser237, Ser240, and Ser247 each carry the phosphoserine modification. A helical transmembrane segment spans residues 300 to 320 (FGLFATLGFFAPSLYIIPLGI). The Extracellular segment spans residues 321–330 (SLGIDQDRAA). The chain crosses the membrane as a helical span at residues 331–351 (FLLSTMAIAEVFGRIGAGFVL). Topologically, residues 352 to 358 (NREPIRK) are cytoplasmic. Residues 359–379 (IYIELICVILLTVSLFAFTFA) form a helical membrane-spanning segment. At 380–381 (TE) the chain is on the extracellular side. Residues 382-402 (FWGLMSCSIFFGFMVGTIGGT) form a helical membrane-spanning segment. Residues 403–423 (HIPLLAEDDVVGIEKMSSAAG) are Cytoplasmic-facing. A helical membrane pass occupies residues 424 to 444 (VYIFIQSIAGLAGPPLAGLLV). Over 445–452 (DQSKIYSR) the chain is Extracellular. Residues 453-473 (AFYSCAAGMALAAVCLALVRP) form a helical membrane-spanning segment. Topologically, residues 474 to 523 (CKMGLCQHHHSGETKVVSHRGKTLQDIPEDFLEMDLAKNEHRVHVQMEPV) are cytoplasmic.

The protein belongs to the major facilitator superfamily. Monocarboxylate porter (TC 2.A.1.13) family. In terms of assembly, forms functional complexes with BSG/CD147 or EMB/GP70 ancillary proteins.

The protein resides in the basolateral cell membrane. The enzyme catalyses taurine(out) = taurine(in). Monocarboxylate transporter selective for taurine. May associate with BSG/CD147 or EMB/GP70 ancillary proteins to mediate facilitative efflux or influx of taurine across the plasma membrane. The transport is pH- and sodium-independent. Rather low-affinity, is likely effective for taurine transport in tissues where taurine is present at high concentrations. The chain is Monocarboxylate transporter 7 from Homo sapiens (Human).